The chain runs to 418 residues: MNTKHVTCRYFLHGVCREGGRCLFSHDLATSKPSTVCRFYQRGQCAYGARCRYDHVKPCNGSVFYPPQEMAPAPLESTPPLLPTQEAAAPVTKSAPQRREKKSVVLRDRDLCGASVEKAHPDPALRPGCAADPPVSELEAKPHSYLEAICTGLDETPIPSAYPDAPQQLCPFAQAGGCHYGESCPYIHGNVCEICGLQVLHPYDQEQRGHHEKLCMANFERDMERAFAFQASEGKVCSICMERVYDKQSPSERRFGILSNCHHTYCLACIRQWRCARQFENPVIKSCPECRVISEFVIPSAYWVEDQSKKFELIEAFKQGMGKKACKYFDQGRGTCPFGGKCLYLHAYPDGTRAEPEKPRKQLGSEGTVRFLNSVRLWDFIEEREQRNLPDAEDEVAELGELFMHLSGVGEEPPAASN.

2 consecutive C3H1-type zinc fingers follow at residues 2–29 and 31–58; these read NTKH…HDLA and SKPS…HVKP. The interval 76–100 is disordered; it reads ESTPPLLPTQEAAAPVTKSAPQRRE. The C3H1-type 3 zinc-finger motif lies at 164-191; sequence DAPQQLCPFAQAGGCHYGESCPYIHGNV. The interval 192-221 is makorin-type Cys-His; the sequence is CEICGLQVLHPYDQEQRGHHEKLCMANFER. The segment at 237 to 291 adopts an RING-type zinc-finger fold; that stretch reads CSICMERVYDKQSPSERRFGILSNCHHTYCLACIRQWRCARQFENPVIKSCPECR. A C3H1-type 4 zinc finger spans residues 320–349; it reads GMGKKACKYFDQGRGTCPFGGKCLYLHAYP.

It localises to the cytoplasm. The protein localises to the nucleus. The enzyme catalyses S-ubiquitinyl-[E2 ubiquitin-conjugating enzyme]-L-cysteine + [acceptor protein]-L-lysine = [E2 ubiquitin-conjugating enzyme]-L-cysteine + N(6)-ubiquitinyl-[acceptor protein]-L-lysine.. The protein operates within protein modification; protein ubiquitination. Functionally, E3 ubiquitin ligase catalyzing the covalent attachment of ubiquitin moieties onto substrate proteins. Inhibits neurogenesis and axis formation during embryonic development by modulating the phosphatidylinositol 3-kinase (PI3K) pathway. Acts downstream of PI3K and akt1 to up-regulate gsk3b mRNA expression. This is E3 ubiquitin-protein ligase makorin-2 (mkrn2) from Xenopus tropicalis (Western clawed frog).